The following is a 1047-amino-acid chain: MTTPQYRQVPAQVDLPALEHAVLDFWREQKIFAKSLEQSEGRPEWVFYEGPPTANGMPGAHHIEARVFKDVFPRFRTMRGYHVGRKAGWDCHGLPVELAVEKELGFSGKQDIEAYGIAEFNAKCRESVTRHTDAFEELTTRMGYWADLQDPYRTMDPEYIESVWWSLKEIFNKGLLVQDHRVAPWCPRCGTGLSDHELAQGYETVVDPSVYVRFPLTSGPLAGEAALVVWTTTPWTLVSNTAVAAHPDVTYVVATDGEEKLVVAEPLLAKALGEGWETTGQSFTGAEMERWTYQRPFELVEFPEPAHYVVNADYVTTEDGTGLVHQSPAFGEDDLKVCRAYGLPVVNPVRPDGTFEEDVPLVGGVFFKKADEKLTEDLETRGLLFKHIPYEHSYPHCWRCHTALLYYAQPSWYIRTTAIKDRLLQENEKTNWFPDAVKHGRYGDWLNNNIDWALSRNRYWGTPLPIWRCAEDHLTVVGSRAELTELSGTDQSSLDPHRPFIDDVTFTCAQEGCSLEAVRVPEVIDAWYDSGSMPFAQWGYPYKNKELFESRYPAQFISEAIDQTRGWFYTLMAVGTLVFDKSSYENVVCLGHILAEDGRKMSKHLGNILQPIPLMDQHGADAVRWFMAAGGSPWAARRVGHGTIQEVVRKTLLTYWNTVAFQALYARTTGWAPSEADPAPADRPVLDRWLLSELHALTDQVTQALDAYDTQRAGKLLSAFVDDLSNWYVRRSRRRFWQGDKAALRTLHEVVETVTKLMAPLTPFITERVWQDLVVPVTPGAPESVHLSSWPEADLTAIDPELSKQMVLVRRLVELGRATRAESGVKTRQPLSRALIAVAGFDTLSPELHSQITEELNVASLASLSEVGGSLVDTTAKANFRALGKRFGKRVQDVAKAVAAADAAALSLALREGTASVEVDGETVTLAPDEVIITETPREGWSVASDSGATVALDLELTEELRRAGLARDAIRLIQEARKNSGLDVADRIALRWTATDPATIAALTDHSGLISDEVLATDFAQGEADDSYGAPFTDEGLSLVFRLRKQ.

Residues 52 to 62 (PTANGMPGAHH) carry the 'HIGH' region motif. The 'KMSKS' region motif lies at 600–604 (KMSKH). Lysine 603 provides a ligand contact to ATP.

It belongs to the class-I aminoacyl-tRNA synthetase family. IleS type 2 subfamily. Monomer. The cofactor is Zn(2+).

It is found in the cytoplasm. The catalysed reaction is tRNA(Ile) + L-isoleucine + ATP = L-isoleucyl-tRNA(Ile) + AMP + diphosphate. In terms of biological role, catalyzes the attachment of isoleucine to tRNA(Ile). As IleRS can inadvertently accommodate and process structurally similar amino acids such as valine, to avoid such errors it has two additional distinct tRNA(Ile)-dependent editing activities. One activity is designated as 'pretransfer' editing and involves the hydrolysis of activated Val-AMP. The other activity is designated 'posttransfer' editing and involves deacylation of mischarged Val-tRNA(Ile). The sequence is that of Isoleucine--tRNA ligase from Streptomyces coelicolor (strain ATCC BAA-471 / A3(2) / M145).